The sequence spans 290 residues: Phosphatidylglycerol--prolipoprotein diacylglyceryl transferase (290 aa).

A run of 7 helical transmembrane segments spans residues 21–41 (VSLH…MWLA), 60–80 (LLYA…VLFY), 98–118 (GGMS…WFAH), 124–144 (FFQV…AGRL), 198–218 (SQLY…NLFI), 224–244 (IGSV…LVEF), and 258–278 (VISM…IMMA). Arginine 143 is a binding site for a 1,2-diacyl-sn-glycero-3-phospho-(1'-sn-glycerol).

The protein belongs to the Lgt family.

It localises to the cell inner membrane. It catalyses the reaction L-cysteinyl-[prolipoprotein] + a 1,2-diacyl-sn-glycero-3-phospho-(1'-sn-glycerol) = an S-1,2-diacyl-sn-glyceryl-L-cysteinyl-[prolipoprotein] + sn-glycerol 1-phosphate + H(+). It participates in protein modification; lipoprotein biosynthesis (diacylglyceryl transfer). In terms of biological role, catalyzes the transfer of the diacylglyceryl group from phosphatidylglycerol to the sulfhydryl group of the N-terminal cysteine of a prolipoprotein, the first step in the formation of mature lipoproteins. The protein is Phosphatidylglycerol--prolipoprotein diacylglyceryl transferase of Sodalis glossinidius (strain morsitans).